Consider the following 175-residue polypeptide: Gamma-crystallin B (175 aa).

Beta/gamma crystallin 'Greek key' domains lie at 2-40 and 41-83; these read GKIT…RVDS and GCWM…RLIP. Residues 84-88 form a connecting peptide region; sequence QHSGT. Beta/gamma crystallin 'Greek key' domains follow at residues 89-129 and 130-172; these read FRMR…NVLD and GCWV…RRVM.

It belongs to the beta/gamma-crystallin family. As to quaternary structure, monomer.

Functionally, crystallins are the dominant structural components of the vertebrate eye lens. The protein is Gamma-crystallin B (CRYGB) of Canis lupus familiaris (Dog).